A 423-amino-acid polypeptide reads, in one-letter code: Tubulin beta-2 chain (423 aa).

Residues Glu44, Ser113, Gly117, Thr118, Gly119, Asn179, and Asn201 each contribute to the GTP site. Position 44 (Glu44) interacts with Mg(2+). The disordered stretch occupies residues 394–423 (VSEYQQYQDATAEEEGEYDEDEDDEGGDYA). The span at 404 to 423 (TAEEEGEYDEDEDDEGGDYA) shows a compositional bias: acidic residues.

It belongs to the tubulin family. Dimer of alpha and beta chains. A typical microtubule is a hollow water-filled tube with an outer diameter of 25 nm and an inner diameter of 15 nM. Alpha-beta heterodimers associate head-to-tail to form protofilaments running lengthwise along the microtubule wall with the beta-tubulin subunit facing the microtubule plus end conferring a structural polarity. Microtubules usually have 13 protofilaments but different protofilament numbers can be found in some organisms and specialized cells. Requires Mg(2+) as cofactor.

Its subcellular location is the cytoplasm. The protein localises to the cytoskeleton. In terms of biological role, tubulin is the major constituent of microtubules, a cylinder consisting of laterally associated linear protofilaments composed of alpha- and beta-tubulin heterodimers. Microtubules grow by the addition of GTP-tubulin dimers to the microtubule end, where a stabilizing cap forms. Below the cap, tubulin dimers are in GDP-bound state, owing to GTPase activity of alpha-tubulin. This chain is Tubulin beta-2 chain (TUBB2), found in Oomycete-like sp. (strain MacKay2000).